A 378-amino-acid chain; its full sequence is RIB43A-like with coiled-coils protein 1 (378 aa).

2 coiled-coil regions span residues 153–250 (RMQQ…VTSD) and 279–334 (EQRA…CAEF).

It belongs to the RIB43A family. As to quaternary structure, microtubule inner protein component of sperm flagellar doublet microtubules.

It is found in the cytoplasm. The protein resides in the cytoskeleton. It localises to the flagellum axoneme. This chain is RIB43A-like with coiled-coils protein 1 (Ribc1), found in Rattus norvegicus (Rat).